Reading from the N-terminus, the 162-residue chain is Cyclic pyranopterin monophosphate synthase (162 aa).

Substrate contacts are provided by residues 75–77 and 113–114; these read LCH and ME. Asp-128 is an active-site residue.

The protein belongs to the MoaC family. In terms of assembly, homohexamer; trimer of dimers.

It carries out the reaction (8S)-3',8-cyclo-7,8-dihydroguanosine 5'-triphosphate = cyclic pyranopterin phosphate + diphosphate. It functions in the pathway cofactor biosynthesis; molybdopterin biosynthesis. Functionally, catalyzes the conversion of (8S)-3',8-cyclo-7,8-dihydroguanosine 5'-triphosphate to cyclic pyranopterin monophosphate (cPMP). The chain is Cyclic pyranopterin monophosphate synthase from Burkholderia ambifaria (strain MC40-6).